Here is a 207-residue protein sequence, read N- to C-terminus: Large ribosomal subunit protein uL4 (207 aa).

Residues 49 to 78 form a disordered region; it reads HAVKNRSAVSGGGRKPWRQKGTGRARQGSI.

The protein belongs to the universal ribosomal protein uL4 family. Part of the 50S ribosomal subunit.

One of the primary rRNA binding proteins, this protein initially binds near the 5'-end of the 23S rRNA. It is important during the early stages of 50S assembly. It makes multiple contacts with different domains of the 23S rRNA in the assembled 50S subunit and ribosome. In terms of biological role, forms part of the polypeptide exit tunnel. The sequence is that of Large ribosomal subunit protein uL4 from Streptococcus suis (strain 98HAH33).